Consider the following 160-residue polypeptide: Large ribosomal subunit protein eL21B (160 aa).

K32 participates in a covalent cross-link: Glycyl lysine isopeptide (Lys-Gly) (interchain with G-Cter in ubiquitin).

It belongs to the eukaryotic ribosomal protein eL21 family. In terms of assembly, component of the large ribosomal subunit (LSU). Mature yeast ribosomes consist of a small (40S) and a large (60S) subunit. The 40S small subunit contains 1 molecule of ribosomal RNA (18S rRNA) and 33 different proteins (encoded by 57 genes). The large 60S subunit contains 3 rRNA molecules (25S, 5.8S and 5S rRNA) and 46 different proteins (encoded by 81 genes).

It localises to the cytoplasm. Functionally, component of the ribosome, a large ribonucleoprotein complex responsible for the synthesis of proteins in the cell. The small ribosomal subunit (SSU) binds messenger RNAs (mRNAs) and translates the encoded message by selecting cognate aminoacyl-transfer RNA (tRNA) molecules. The large subunit (LSU) contains the ribosomal catalytic site termed the peptidyl transferase center (PTC), which catalyzes the formation of peptide bonds, thereby polymerizing the amino acids delivered by tRNAs into a polypeptide chain. The nascent polypeptides leave the ribosome through a tunnel in the LSU and interact with protein factors that function in enzymatic processing, targeting, and the membrane insertion of nascent chains at the exit of the ribosomal tunnel. In Saccharomyces cerevisiae (strain ATCC 204508 / S288c) (Baker's yeast), this protein is Large ribosomal subunit protein eL21B.